The following is a 471-amino-acid chain: Glutamate--tRNA ligase (471 aa).

Residues 9 to 19 (PSPTGYLHVGG) carry the 'HIGH' region motif. The Zn(2+) site is built by cysteine 98, cysteine 100, cysteine 125, and histidine 127. The short motif at 237–241 (KLSKR) is the 'KMSKS' region element. Position 240 (lysine 240) interacts with ATP.

This sequence belongs to the class-I aminoacyl-tRNA synthetase family. Glutamate--tRNA ligase type 1 subfamily. In terms of assembly, monomer. The cofactor is Zn(2+).

It localises to the cytoplasm. The catalysed reaction is tRNA(Glu) + L-glutamate + ATP = L-glutamyl-tRNA(Glu) + AMP + diphosphate. In terms of biological role, catalyzes the attachment of glutamate to tRNA(Glu) in a two-step reaction: glutamate is first activated by ATP to form Glu-AMP and then transferred to the acceptor end of tRNA(Glu). The chain is Glutamate--tRNA ligase from Enterobacter sp. (strain 638).